The chain runs to 494 residues: Probable capsid protein (494 aa).

Positions 120–123 match the Nuclear localization signal motif; it reads RPKR. The segment at 418–435 adopts a CCHC-type zinc-finger fold; it reads CRCWVCNIEGHYANECPN. The segment at 474–494 is disordered; that stretch reads LSSSDSELDDTCEESSSEESE. Positions 479 to 494 are enriched in acidic residues; sequence SELDDTCEESSSEESE.

This sequence belongs to the caulimoviridae capsid protein family. As to quaternary structure, interacts (via nuclear localization signal) with host importin alpha.

Its subcellular location is the virion. The protein resides in the host nucleus. Functionally, self assembles to form an icosahedral capsid, about 50 nm in diameter, nm, composed of 420 subunits of the viral capsid protein. The capsid encapsulates the genomic dsDNA. Following virus entry into host cell, provides nuclear import of the viral genome. Virus particles do not enter the nucleus, but dock at the nuclear membrane through the interaction with host importins. The sequence is that of Probable capsid protein from Dianthus caryophyllus (Carnation).